The following is a 197-amino-acid chain: Small ribosomal subunit protein uS4B (197 aa).

An S4 RNA-binding domain is found at 88-150; sequence SRLDNMVYRM…SRKTEMFVNN (63 aa).

The protein belongs to the universal ribosomal protein uS4 family. As to quaternary structure, part of the 30S ribosomal subunit. Contacts protein S5. The interaction surface between S4 and S5 is involved in control of translational fidelity.

Functionally, one of the primary rRNA binding proteins, it binds directly to 16S rRNA where it nucleates assembly of the body of the 30S subunit. In terms of biological role, with S5 and S12 plays an important role in translational accuracy. The protein is Small ribosomal subunit protein uS4B of Clostridium perfringens (strain SM101 / Type A).